Consider the following 280-residue polypeptide: Cis-2,3-dihydrobiphenyl-2,3-diol dehydrogenase (280 aa).

Leu9 to Ala33 contacts NAD(+). Ser142 serves as a coordination point for substrate. Tyr155 acts as the Proton acceptor in catalysis.

Belongs to the short-chain dehydrogenases/reductases (SDR) family.

The catalysed reaction is (2R,3S)-3-phenylcyclohexa-3,5-diene-1,2-diol + NAD(+) = biphenyl-2,3-diol + NADH + H(+). Its pathway is xenobiotic degradation; biphenyl degradation; 2-hydroxy-2,4-pentadienoate and benzoate from biphenyl: step 2/4. This chain is Cis-2,3-dihydrobiphenyl-2,3-diol dehydrogenase (bphB), found in Rhodococcus globerulus.